The chain runs to 376 residues: UDP-N-acetylglucosamine 2-epimerase (376 aa).

Residues R10, K15, D95, E117, H213, Q271, F276, 290-292 (SGG), E296, and R313 contribute to the substrate site.

This sequence belongs to the UDP-N-acetylglucosamine 2-epimerase family. As to quaternary structure, homodimer.

It localises to the cytoplasm. The enzyme catalyses UDP-N-acetyl-alpha-D-glucosamine = UDP-N-acetyl-alpha-D-mannosamine. Its pathway is bacterial outer membrane biogenesis; enterobacterial common antigen biosynthesis. Its function is as follows. Catalyzes the reversible epimerization at C-2 of UDP-N-acetylglucosamine (UDP-GlcNAc) and thereby provides bacteria with UDP-N-acetylmannosamine (UDP-ManNAc), the activated donor of ManNAc residues. This Escherichia coli O157:H7 protein is UDP-N-acetylglucosamine 2-epimerase.